Here is a 186-residue protein sequence, read N- to C-terminus: Ribosome-recycling factor (186 aa).

This sequence belongs to the RRF family.

Its subcellular location is the cytoplasm. Functionally, responsible for the release of ribosomes from messenger RNA at the termination of protein biosynthesis. May increase the efficiency of translation by recycling ribosomes from one round of translation to another. This Paracidovorax citrulli (strain AAC00-1) (Acidovorax citrulli) protein is Ribosome-recycling factor.